The following is a 707-amino-acid chain: Elongation factor G (707 aa).

The 283-residue stretch at 8-290 folds into the tr-type G domain; it reads ERYRNIGICA…AVIEYLPSPT (283 aa). Residues 17–24, 88–92, and 142–145 each bind GTP; these read AHVDAGKT, DTPGH, and NKMD.

It belongs to the TRAFAC class translation factor GTPase superfamily. Classic translation factor GTPase family. EF-G/EF-2 subfamily.

It is found in the cytoplasm. Catalyzes the GTP-dependent ribosomal translocation step during translation elongation. During this step, the ribosome changes from the pre-translocational (PRE) to the post-translocational (POST) state as the newly formed A-site-bound peptidyl-tRNA and P-site-bound deacylated tRNA move to the P and E sites, respectively. Catalyzes the coordinated movement of the two tRNA molecules, the mRNA and conformational changes in the ribosome. This chain is Elongation factor G, found in Idiomarina loihiensis (strain ATCC BAA-735 / DSM 15497 / L2-TR).